The following is a 466-amino-acid chain: UDP-N-acetylmuramoylalanine--D-glutamate ligase (466 aa).

139–145 (GTAGKGG) contributes to the ATP binding site.

Belongs to the MurCDEF family.

It is found in the cytoplasm. It carries out the reaction UDP-N-acetyl-alpha-D-muramoyl-L-alanine + D-glutamate + ATP = UDP-N-acetyl-alpha-D-muramoyl-L-alanyl-D-glutamate + ADP + phosphate + H(+). The protein operates within cell wall biogenesis; peptidoglycan biosynthesis. In terms of biological role, cell wall formation. Catalyzes the addition of glutamate to the nucleotide precursor UDP-N-acetylmuramoyl-L-alanine (UMA). The protein is UDP-N-acetylmuramoylalanine--D-glutamate ligase of Deinococcus geothermalis (strain DSM 11300 / CIP 105573 / AG-3a).